The chain runs to 387 residues: Mannitol-1-phosphate 5-dehydrogenase (387 aa).

Residue 3 to 14 (ALHFGAGNIGRG) coordinates NAD(+).

Belongs to the mannitol dehydrogenase family.

The catalysed reaction is D-mannitol 1-phosphate + NAD(+) = beta-D-fructose 6-phosphate + NADH + H(+). This Yersinia pseudotuberculosis serotype IB (strain PB1/+) protein is Mannitol-1-phosphate 5-dehydrogenase.